We begin with the raw amino-acid sequence, 222 residues long: Peroxiredoxin (222 aa).

One can recognise a Thioredoxin domain in the interval 2–157 (VVLGQKFPEV…ILRLVEALQT (156 aa)). Cys44 (cysteine sulfenic acid (-SOH) intermediate) is an active-site residue. Arg120 lines the substrate pocket. Cysteines 211 and 217 form a disulfide.

It belongs to the peroxiredoxin family. Prx6 subfamily. In terms of assembly, homodecamer. Pentamer of dimers that assemble into a ring structure.

Its subcellular location is the cytoplasm. The enzyme catalyses a hydroperoxide + [thioredoxin]-dithiol = an alcohol + [thioredoxin]-disulfide + H2O. Functionally, thiol-specific peroxidase that catalyzes the reduction of hydrogen peroxide and organic hydroperoxides to water and alcohols, respectively. Plays a role in cell protection against oxidative stress by detoxifying peroxides. This Nanoarchaeum equitans (strain Kin4-M) protein is Peroxiredoxin.